The following is a 367-amino-acid chain: GTP cyclohydrolase FolE2 (367 aa).

Belongs to the GTP cyclohydrolase IV family.

The catalysed reaction is GTP + H2O = 7,8-dihydroneopterin 3'-triphosphate + formate + H(+). The protein operates within cofactor biosynthesis; 7,8-dihydroneopterin triphosphate biosynthesis; 7,8-dihydroneopterin triphosphate from GTP: step 1/1. Converts GTP to 7,8-dihydroneopterin triphosphate. This chain is GTP cyclohydrolase FolE2, found in Roseobacter denitrificans (strain ATCC 33942 / OCh 114) (Erythrobacter sp. (strain OCh 114)).